A 166-amino-acid chain; its full sequence is UPF0303 protein Avin_29320 (166 aa).

The protein belongs to the UPF0303 family.

The sequence is that of UPF0303 protein Avin_29320 from Azotobacter vinelandii (strain DJ / ATCC BAA-1303).